Consider the following 1194-residue polypeptide: Peroxisomal ATPase PEX1 (1194 aa).

The segment at 220–255 is disordered; it reads KTRQRRMSHQGKSVKAKSLASTRHGKRRDDGSGPSG. The segment covering 221 to 234 has biased composition (basic residues); the sequence is TRQRRMSHQGKSVK. Residues 538 to 730 are AAA-cassette D1; sequence RSASVLLTGA…GPEPTLKIEK (193 aa). ATP contacts are provided by residues 546-553 and 849-856; these read GARGSGKT and GYPGCGKT. The segment at 844 to 1028 is AAA-cassette D2; sequence GLLLYGYPGC…LYNAHLEAIH (185 aa). 3 disordered regions span residues 1062-1084, 1116-1139, and 1174-1194; these read YISFSMGNKDSTGEPSTQPLTNG, QVQQQQSQTNQAQEEEKGDDEPVI, and RSGEMPSGQSSTEIGGRSSLM. The segment covering 1066–1084 has biased composition (polar residues); that stretch reads SMGNKDSTGEPSTQPLTNG. Residues 1116-1127 show a composition bias toward low complexity; sequence QVQQQQSQTNQA.

This sequence belongs to the AAA ATPase family. As to quaternary structure, interacts with PEX6; forming the PEX1-PEX6 AAA ATPase complex, which is composed of a heterohexamer formed by a trimer of PEX1-PEX6 dimers.

The protein resides in the cytoplasm. The protein localises to the cytosol. It is found in the peroxisome membrane. It catalyses the reaction ATP + H2O = ADP + phosphate + H(+). Component of the PEX1-PEX6 AAA ATPase complex, a protein dislocase complex that mediates the ATP-dependent extraction of the PEX5 receptor from peroxisomal membranes, an essential step for PEX5 recycling. Specifically recognizes PEX5 monoubiquitinated at 'Cys-6', and pulls it out of the peroxisome lumen through the PEX2-PEX10-PEX12 retrotranslocation channel. Extraction by the PEX1-PEX6 AAA ATPase complex is accompanied by unfolding of the TPR repeats and release of bound cargo from PEX5. Regulates autophagy and biogenesis of peroxisomes and Woronin bodies. Plays important roles in mycelial growth and development and stress response. Is also essential for conidiation and fatty acid utilization. Required for nematode predation via trap formation. This is Peroxisomal ATPase PEX1 from Arthrobotrys oligospora (strain ATCC 24927 / CBS 115.81 / DSM 1491) (Nematode-trapping fungus).